The following is a 298-amino-acid chain: Protoheme IX farnesyltransferase (298 aa).

Transmembrane regions (helical) follow at residues 26–46 (VVSL…PGVV), 52–72 (IFAT…NCLV), 99–119 (FVFL…LVNP), 120–140 (LTMW…TVIL), 148–168 (IVIG…AVTG), 174–194 (ALLL…ALAL), 219–239 (LHVL…YATQ), 241–261 (SGLI…YYAV), and 276–296 (FRYS…DHYI).

It belongs to the UbiA prenyltransferase family. Protoheme IX farnesyltransferase subfamily.

The protein resides in the cell inner membrane. The catalysed reaction is heme b + (2E,6E)-farnesyl diphosphate + H2O = Fe(II)-heme o + diphosphate. It participates in porphyrin-containing compound metabolism; heme O biosynthesis; heme O from protoheme: step 1/1. Functionally, converts heme B (protoheme IX) to heme O by substitution of the vinyl group on carbon 2 of heme B porphyrin ring with a hydroxyethyl farnesyl side group. The protein is Protoheme IX farnesyltransferase of Nitrosospira multiformis (strain ATCC 25196 / NCIMB 11849 / C 71).